A 228-amino-acid polypeptide reads, in one-letter code: Uracil-DNA glycosylase (228 aa).

Asp64 (proton acceptor) is an active-site residue.

It belongs to the uracil-DNA glycosylase (UDG) superfamily. UNG family.

It is found in the cytoplasm. The catalysed reaction is Hydrolyzes single-stranded DNA or mismatched double-stranded DNA and polynucleotides, releasing free uracil.. In terms of biological role, excises uracil residues from the DNA which can arise as a result of misincorporation of dUMP residues by DNA polymerase or due to deamination of cytosine. The protein is Uracil-DNA glycosylase of Yersinia pestis bv. Antiqua (strain Antiqua).